A 256-amino-acid chain; its full sequence is Small ribosomal subunit protein eS1 (256 aa).

The segment covering 1–18 (MAVGKNKRLSKGKKGIKK) has biased composition (basic residues). The tract at residues 1-20 (MAVGKNKRLSKGKKGIKKRT) is disordered. An N-acetylalanine; partial modification is found at alanine 2.

This sequence belongs to the eukaryotic ribosomal protein eS1 family. As to quaternary structure, component of the small ribosomal subunit. Mature ribosomes consist of a small (40S) and a large (60S) subunit. The 40S subunit contains about 33 different proteins and 1 molecule of RNA (18S). The 60S subunit contains about 49 different proteins and 3 molecules of RNA (25S, 5.8S and 5S).

Its subcellular location is the cytoplasm. This is Small ribosomal subunit protein eS1 (rps1) from Aspergillus flavus (strain ATCC 200026 / FGSC A1120 / IAM 13836 / NRRL 3357 / JCM 12722 / SRRC 167).